A 407-amino-acid polypeptide reads, in one-letter code: Nuclear hormone receptor family member nhr-134 (407 aa).

The NR C4-type zinc-finger motif lies at 11–31; sequence CEICGQKTSGRHFGVMSCRSC. The segment at 47-66 adopts an NR C4-type; degenerate zinc-finger fold; sequence RCPNGNCKLLENGKFKCKKC. Residues 157 to 407 form the NR LBD domain; that stretch reads QFHNSLERLA…FSEPDMFEST (251 aa).

This sequence belongs to the nuclear hormone receptor family.

The protein resides in the nucleus. Functionally, orphan nuclear receptor. This chain is Nuclear hormone receptor family member nhr-134 (nhr-134), found in Caenorhabditis elegans.